Consider the following 67-residue polypeptide: Conotoxin Im3.1 (67 aa).

The signal sequence occupies residues 1 to 20; the sequence is MMSTLVVLLTICLLMLPLTA. Residues 21-52 constitute a propeptide that is removed on maturation; it reads RQLDADQLADQLAERMEDISADQNRWFDPVKR. 3 disulfide bridges follow: C53–C63, C54–C61, and C59–C64.

The protein belongs to the conotoxin M superfamily. As to expression, expressed by the venom duct.

The protein localises to the secreted. Its function is as follows. Probable neurotoxin. The sequence is that of Conotoxin Im3.1 from Conus imperialis (Imperial cone).